Consider the following 389-residue polypeptide: Pyruvate dehydrogenase E1 component subunit alpha-1, mitochondrial (389 aa).

The transit peptide at 1–32 (MALSRLSSRSNIITRPFSAAFSRLISTDTTPI) directs the protein to the mitochondrion. The pyruvate site is built by His90, Tyr116, Arg117, Gly165, Val167, Asp196, Gly197, Ala198, Asn225, and Tyr227. Positions 116, 117, 165, 167, 196, 197, 198, and 225 each coordinate thiamine diphosphate. Residue Asp196 participates in Mg(2+) binding. Positions 225 and 227 each coordinate Mg(2+). His291 contributes to the thiamine diphosphate binding site.

In terms of assembly, tetramer of 2 alpha and 2 beta subunits. The cofactor is thiamine diphosphate. It depends on Mg(2+) as a cofactor. In terms of tissue distribution, expressed in roots, rosettes and flowers.

It localises to the mitochondrion matrix. The catalysed reaction is N(6)-[(R)-lipoyl]-L-lysyl-[protein] + pyruvate + H(+) = N(6)-[(R)-S(8)-acetyldihydrolipoyl]-L-lysyl-[protein] + CO2. Its activity is regulated as follows. E1 activity is regulated by phosphorylation (inactivation) and dephosphorylation (activation) of the alpha subunit. In terms of biological role, the pyruvate dehydrogenase complex catalyzes the overall conversion of pyruvate to acetyl-CoA and CO(2). It contains multiple copies of three enzymatic components: pyruvate dehydrogenase (E1), dihydrolipoamide acetyltransferase (E2) and lipoamide dehydrogenase (E3). The protein is Pyruvate dehydrogenase E1 component subunit alpha-1, mitochondrial (E1 ALPHA) of Arabidopsis thaliana (Mouse-ear cress).